The following is a 1549-amino-acid chain: ATP-binding cassette sub-family C member 9 (1549 aa).

Residues 1–30 are Extracellular-facing; the sequence is MSLSFCGNNISSYNINDGVLQNSCFVDALN. N-linked (GlcNAc...) asparagine glycosylation occurs at Asn9. Residues 31–51 form a helical membrane-spanning segment; the sequence is LVPHVFLLFITFPILFIGWGS. At 52–72 the chain is on the cytoplasmic side; it reads QSSKVQIHHNTWLHFPGHNLR. Residues 73-93 form a helical membrane-spanning segment; sequence WILTFALLFVHVCEIAEGIVS. Residues 94–101 lie on the Extracellular side of the membrane; sequence DSRRESRH. A helical transmembrane segment spans residues 102-122; the sequence is LHLFMPAVMGFVATTTSIVYY. The Cytoplasmic segment spans residues 123–132; the sequence is HNIETSNFPK. Residues 133–153 traverse the membrane as a helical segment; sequence LLLALFLYWVMAFITKTIKLV. At 154–167 the chain is on the extracellular side; that stretch reads KYCQSGLDISNLRF. Residues 168 to 188 traverse the membrane as a helical segment; that stretch reads CITGMMVILNGLLMAVEINVI. At 189 to 301 the chain is on the cytoplasmic side; it reads RVRRYVFFMN…AFGRPILLSS (113 aa). The ABC transmembrane type-1 1 domain maps to 297-597; that stretch reads ILLSSTFRYL…LSTVVRFAVK (301 aa). A helical membrane pass occupies residues 302-322; sequence TFRYLADLLGFAGPLCISGIV. Topologically, residues 323–350 are extracellular; that stretch reads QRVNETQNGTNNTTGISETLSSKEFLEN. Residues Asn326, Asn330, Asn333, and Asn334 are each glycosylated (N-linked (GlcNAc...) asparagine). Residues 351 to 371 form a helical membrane-spanning segment; it reads AYVLAVLLFLALILQRTFLQA. Over 372 to 423 the chain is Cytoplasmic; that stretch reads SYYVTIETGINLRGALLAMIYNKILRLSTSNLSMGEMTLGQINNLVAIETNQ. A helical membrane pass occupies residues 424-444; sequence LMWFLFLCPNLWAMPVQIIMG. Residues 445–455 lie on the Extracellular side of the membrane; it reads VILLYNLLGSS. Residues 456–476 traverse the membrane as a helical segment; the sequence is ALVGAAVIVLLAPIQYFIATK. The Cytoplasmic portion of the chain corresponds to 477 to 531; that stretch reads LAEAQKSTLDYSTERLKKTNEILKGIKLLKLYAWEHIFCKSVEETRMKELSSLKT. The helical transmembrane segment at 532–552 threads the bilayer; it reads FALYTSLSIFMNAAIPIAAVL. The Extracellular portion of the chain corresponds to 553–571; it reads ATFVTHAYASGNNLKPAEA. Residues 572–592 form a helical membrane-spanning segment; that stretch reads FASLSLFHILVTPLFLLSTVV. At 593 to 990 the chain is on the cytoplasmic side; sequence RFAVKAIISV…TCWRYLTSGG (398 aa). The ABC transporter 1 domain occupies 672-912; sequence IKVTNGYFSW…DVELYEHWKT (241 aa). Residue 705–712 participates in ATP binding; the sequence is GQVGCGKS. Residues 944–967 form a disordered region; the sequence is REAKAQMEDEDEEEEEEEDEDDNM. A compositionally biased stretch (acidic residues) spans 951–966; it reads EDEDEEEEEEEDEDDN. A helical membrane pass occupies residues 991–1011; sequence FFLLILMIFSKLLKHSVIVAI. An ABC transmembrane type-1 2 domain is found at 994 to 1274; sequence LILMIFSKLL…VVRNLADLEV (281 aa). The Extracellular segment spans residues 1012 to 1034; it reads DYWLATWTSEYSINNTGKADQTY. A helical transmembrane segment spans residues 1035–1055; the sequence is YVAGFSILCGAGIFLCLVTSL. The Cytoplasmic portion of the chain corresponds to 1056–1127; it reads TVEWMGLTAA…TLLCLSAIGM (72 aa). The helical transmembrane segment at 1128–1148 threads the bilayer; the sequence is ISYATPVFLVALLPLGVAFYF. The Extracellular portion of the chain corresponds to 1149-1245; the sequence is IQKYFRVASK…IASISGSSNS (97 aa). Residues 1246 to 1266 traverse the membrane as a helical segment; it reads GLVGLGLLYALTITNYLNWVV. Topologically, residues 1267–1549 are cytoplasmic; that stretch reads RNLADLEVQM…LFSTLVMTNK (283 aa). An ABC transporter 2 domain is found at 1312–1546; it reads IKIHDLCVRY…KNGLFSTLVM (235 aa). 1346 to 1353 lines the ATP pocket; that stretch reads GRTGSGKS.

Belongs to the ABC transporter superfamily. ABCC family. Conjugate transporter (TC 3.A.1.208) subfamily. In terms of assembly, interacts with KCNJ11. Interacts with KCNJ8.

It localises to the membrane. Subunit of ATP-sensitive potassium channels (KATP). Can form cardiac and smooth muscle-type KATP channels with KCNJ11. KCNJ11 forms the channel pore while ABCC9 is required for activation and regulation. Can form a sulfonylurea-sensitive but ATP-insensitive potassium channel with KCNJ8. The protein is ATP-binding cassette sub-family C member 9 (ABCC9) of Homo sapiens (Human).